The primary structure comprises 260 residues: 5'-nucleotidase SurE (260 aa).

4 residues coordinate a divalent metal cation: aspartate 8, aspartate 9, serine 39, and asparagine 96.

It belongs to the SurE nucleotidase family. A divalent metal cation serves as cofactor.

It is found in the cytoplasm. It catalyses the reaction a ribonucleoside 5'-phosphate + H2O = a ribonucleoside + phosphate. In terms of biological role, nucleotidase that shows phosphatase activity on nucleoside 5'-monophosphates. The protein is 5'-nucleotidase SurE of Moorella thermoacetica (strain ATCC 39073 / JCM 9320).